Consider the following 232-residue polypeptide: Orotidine 5'-phosphate decarboxylase (232 aa).

Substrate-binding positions include aspartate 13, lysine 35, 62–71 (DLKFHDIPNT), threonine 122, arginine 182, glutamine 191, glycine 211, and arginine 212. The active-site Proton donor is the lysine 64.

The protein belongs to the OMP decarboxylase family. Type 1 subfamily. As to quaternary structure, homodimer.

It catalyses the reaction orotidine 5'-phosphate + H(+) = UMP + CO2. It participates in pyrimidine metabolism; UMP biosynthesis via de novo pathway; UMP from orotate: step 2/2. In terms of biological role, catalyzes the decarboxylation of orotidine 5'-monophosphate (OMP) to uridine 5'-monophosphate (UMP). The chain is Orotidine 5'-phosphate decarboxylase from Pseudomonas aeruginosa (strain LESB58).